A 74-amino-acid polypeptide reads, in one-letter code: Heat shock factor-binding protein 1-like protein 1 (74 aa).

Residues Arg12–Asn65 are a coiled coil.

The protein belongs to the HSBP1 family.

In Homo sapiens (Human), this protein is Heat shock factor-binding protein 1-like protein 1 (HSBP1L1).